The chain runs to 201 residues: Transgelin (201 aa).

The residue at position 2 (Ala-2) is an N-acetylalanine. Residues 24-137 enclose the Calponin-homology (CH) domain; it reads EELEERLVEW…RTLMALGSLA (114 aa). A Phosphoserine modification is found at Ser-166. An N6-acetyllysine modification is found at Lys-172. The stretch at 175-200 is one Calponin-like repeat; the sequence is IGLQMGSNRGASQAGMTGYGRPRQII. Ser-181 carries the post-translational modification Phosphoserine. Residue Arg-183 is modified to Omega-N-methylarginine.

It belongs to the calponin family.

It is found in the cytoplasm. In terms of biological role, actin cross-linking/gelling protein. Involved in calcium interactions and contractile properties of the cell that may contribute to replicative senescence. The chain is Transgelin (TAGLN) from Homo sapiens (Human).